A 119-amino-acid chain; its full sequence is MANTKRELFLKRRLRVRNKLKASANGRLRLSVHRSSKNISAQLIDDANGVTLAAASTLEKGLGFVGKNNVEASAAVGRAIAERAKAAGIEECFFDRGGFLFHGKIKALADAAREGGLKF.

This sequence belongs to the universal ribosomal protein uL18 family. Part of the 50S ribosomal subunit; part of the 5S rRNA/L5/L18/L25 subcomplex. Contacts the 5S and 23S rRNAs.

In terms of biological role, this is one of the proteins that bind and probably mediate the attachment of the 5S RNA into the large ribosomal subunit, where it forms part of the central protuberance. This is Large ribosomal subunit protein uL18 from Cereibacter sphaeroides (strain ATCC 17029 / ATH 2.4.9) (Rhodobacter sphaeroides).